A 60-amino-acid chain; its full sequence is Large ribosomal subunit protein uL30 (60 aa).

This sequence belongs to the universal ribosomal protein uL30 family. In terms of assembly, part of the 50S ribosomal subunit.

This chain is Large ribosomal subunit protein uL30, found in Idiomarina loihiensis (strain ATCC BAA-735 / DSM 15497 / L2-TR).